The chain runs to 383 residues: Glutaminyl-peptide cyclotransferase-like protein (383 aa).

Residues 33–53 (VQFLPLLLLALAMGLAFYIVW) traverse the membrane as a helical segment. An intrachain disulfide couples cysteine 168 to cysteine 192. Aspartate 187 contacts Zn(2+). Glutamate 226 functions as the Proton acceptor in the catalytic mechanism. Glutamate 227 contacts Zn(2+). The active-site Proton acceptor is the aspartate 270. Residue histidine 352 participates in Zn(2+) binding.

The protein belongs to the glutaminyl-peptide cyclotransferase family. In terms of tissue distribution, detected in thalamus, hippocampus, brain cortex, cerebellum, kidney, lung and liver, and at low levels in heart and spleen.

The protein resides in the golgi apparatus membrane. It catalyses the reaction N-terminal L-glutaminyl-[peptide] = N-terminal 5-oxo-L-prolyl-[peptide] + NH4(+). Responsible for the biosynthesis of pyroglutamyl peptides. In Mus musculus (Mouse), this protein is Glutaminyl-peptide cyclotransferase-like protein (Qpctl).